The primary structure comprises 190 residues: Movement protein TGB3 (190 aa).

The Cytoplasmic segment spans residues 1–52 (MDPPVILHSPNCSCQFCSSELPSTHTCGSQDRTVPLHVEATAAGHMEAKNFS). The chain crosses the membrane as a helical span at residues 53–73 (LQYVLLVAFVSVLLGFSFCVY). At 74 to 166 (LKSMSNDEAS…TPCENNVLLK (93 aa)) the chain is on the lumenal side. 2 positions are modified to phosphotyrosine: Tyr89 and Tyr120. The Involved in plasmodesmata targeting and virus cell-to-cell movement signature appears at 89 to 93 (YQDLN). The helical transmembrane segment at 167–187 (LWKDDLSFTIIAVTVLVGAML) threads the bilayer. The Cytoplasmic portion of the chain corresponds to 188-190 (ARC).

The protein belongs to the virgaviridae TGB3 movement protein family. As to quaternary structure, interacts with movement protein TGB2. TGB1-TGB3-TGB2 complex formation is enhanced by ATP hydrolysis.

Its subcellular location is the host cell junction. It is found in the host plasmodesma. The protein localises to the host endoplasmic reticulum membrane. The protein resides in the host cytoplasm. It localises to the host cytoskeleton. Its function is as follows. Participates in the transport of viral genome to neighboring plant cells directly through plasmodesmata, without any budding. TGBp2 and TGBp3 are necessary for intracellular delivery of TGBp1-containing vRNPs to plasmodesmata. Can gate plasmodesmata and increase their size exclusion limit. Induces host actin cytoskeleton network thickening, which probably plays a major role in virus cell-to-cell movement. This chain is Movement protein TGB3, found in Solanum nigrum (Black nightshade).